The sequence spans 452 residues: FAD transporter (452 aa).

Helical transmembrane passes span 21–41 (LPNL…TFFI), 49–69 (LAAI…AIGV), 96–116 (ALLL…IFIE), 131–151 (LIHD…LLMV), 167–187 (MIMT…IFGI), 199–219 (AIAT…LLII), 248–270 (AALM…AHID), 283–303 (LESV…PFIA), 324–344 (FILV…QPLA), 357–377 (LSFY…VIIF), 392–412 (VINL…GSYI), and 417–437 (GLLL…YYLA).

Belongs to the multi antimicrobial extrusion (MATE) (TC 2.A.66.1) family.

It is found in the cell inner membrane. Flavin adenine dinucleotide (FAD) transporter that facilitates export of flavin electron shuttles. This chain is FAD transporter, found in Shewanella oneidensis (strain ATCC 700550 / JCM 31522 / CIP 106686 / LMG 19005 / NCIMB 14063 / MR-1).